The following is a 529-amino-acid chain: Bifunctional purine biosynthesis protein PurH (529 aa).

The MGS-like domain occupies 1-148; that stretch reads MTNRNVIKNV…KNYKNVLVVT (148 aa).

It belongs to the PurH family.

The enzyme catalyses (6R)-10-formyltetrahydrofolate + 5-amino-1-(5-phospho-beta-D-ribosyl)imidazole-4-carboxamide = 5-formamido-1-(5-phospho-D-ribosyl)imidazole-4-carboxamide + (6S)-5,6,7,8-tetrahydrofolate. It catalyses the reaction IMP + H2O = 5-formamido-1-(5-phospho-D-ribosyl)imidazole-4-carboxamide. It participates in purine metabolism; IMP biosynthesis via de novo pathway; 5-formamido-1-(5-phospho-D-ribosyl)imidazole-4-carboxamide from 5-amino-1-(5-phospho-D-ribosyl)imidazole-4-carboxamide (10-formyl THF route): step 1/1. It functions in the pathway purine metabolism; IMP biosynthesis via de novo pathway; IMP from 5-formamido-1-(5-phospho-D-ribosyl)imidazole-4-carboxamide: step 1/1. The chain is Bifunctional purine biosynthesis protein PurH from Buchnera aphidicola subsp. Baizongia pistaciae (strain Bp).